A 781-amino-acid polypeptide reads, in one-letter code: Coiled-coil and C2 domain-containing protein 1-like (781 aa).

Disordered stretches follow at residues 32-63 (MGRVSRPAAPARGAPPAARGRPAPAAPANVPG), 94-134 (ELNG…APNS), 187-296 (ESEI…AKES), 313-373 (CSAD…TEGN), and 403-447 (GELP…VEGK). Residues 37 to 59 (RPAAPARGAPPAARGRPAPAAPA) show a composition bias toward low complexity. Residues 98 to 107 (LVGGGGGGGA) show a composition bias toward gly residues. Residues 108 to 118 (APTVPTRAAPR) show a composition bias toward low complexity. Pro residues-rich tracts occupy residues 119–129 (APGPSGPPPSA) and 204–222 (PLPPPAPTAQPAHHPPAPP). The span at 244 to 256 (APAPTAAAPPATK) shows a compositional bias: low complexity. Over residues 269 to 280 (ILHHRRDLHKQN) the composition is skewed to basic residues. Residues 285-296 (IADKDKESAKES) show a composition bias toward basic and acidic residues. The span at 324–341 (PPSPPPYRKPAPPQPQAP) shows a compositional bias: pro residues. Residues 363–373 (KMAEKAKTEGN) show a composition bias toward basic and acidic residues. The 137-residue stretch at 605–741 (YEMRQIPSAD…EHSAEMEESL (137 aa)) folds into the C2 domain.

It belongs to the CC2D1 family.

In Caenorhabditis elegans, this protein is Coiled-coil and C2 domain-containing protein 1-like.